The primary structure comprises 245 residues: MINWKVELSYIGKDFWGFQKQPGKRTVQGELEKVLKLLFDEDIKVIGAGRTDAGVHALGQVVNFKTKESKNFSCDKLYKVLNKLLPGDIKIKKVEIVDDNFHARYSAKRRWYIYVIYNNEEKNLFLRDYCWWINKPLDKDLLNLSANLFKGIHDFRNFCVIENYDNTNVEIYESFWYFKEDLLIYFVSAPFFLRKMVRFIVGSMVEVGLKKKELEDLEKYLKDRKEERFSSPAPASGLYLFKIDY.

D52 (nucleophile) is an active-site residue. Position 112 (Y112) interacts with substrate.

Belongs to the tRNA pseudouridine synthase TruA family. As to quaternary structure, homodimer.

It catalyses the reaction uridine(38/39/40) in tRNA = pseudouridine(38/39/40) in tRNA. Functionally, formation of pseudouridine at positions 38, 39 and 40 in the anticodon stem and loop of transfer RNAs. This chain is tRNA pseudouridine synthase A, found in Dictyoglomus thermophilum (strain ATCC 35947 / DSM 3960 / H-6-12).